The following is a 158-amino-acid chain: NAD(P)H-quinone oxidoreductase subunit J, chloroplastic (158 aa).

Belongs to the complex I 30 kDa subunit family. In terms of assembly, NDH is composed of at least 16 different subunits, 5 of which are encoded in the nucleus.

Its subcellular location is the plastid. It localises to the chloroplast thylakoid membrane. The catalysed reaction is a plastoquinone + NADH + (n+1) H(+)(in) = a plastoquinol + NAD(+) + n H(+)(out). The enzyme catalyses a plastoquinone + NADPH + (n+1) H(+)(in) = a plastoquinol + NADP(+) + n H(+)(out). Its function is as follows. NDH shuttles electrons from NAD(P)H:plastoquinone, via FMN and iron-sulfur (Fe-S) centers, to quinones in the photosynthetic chain and possibly in a chloroplast respiratory chain. The immediate electron acceptor for the enzyme in this species is believed to be plastoquinone. Couples the redox reaction to proton translocation, and thus conserves the redox energy in a proton gradient. The protein is NAD(P)H-quinone oxidoreductase subunit J, chloroplastic of Nasturtium officinale (Watercress).